The sequence spans 168 residues: Endoribonuclease YbeY (168 aa).

His126, His130, and His136 together coordinate Zn(2+).

Belongs to the endoribonuclease YbeY family. It depends on Zn(2+) as a cofactor.

The protein resides in the cytoplasm. Its function is as follows. Single strand-specific metallo-endoribonuclease involved in late-stage 70S ribosome quality control and in maturation of the 3' terminus of the 16S rRNA. The chain is Endoribonuclease YbeY from Rhizobium meliloti (strain 1021) (Ensifer meliloti).